Reading from the N-terminus, the 628-residue chain is MBT domain-containing protein 1 (628 aa).

The tract at residues 1-31 (MFDGYDSCSEDTSSSSSSEESEEEVAPLPSN) is disordered. Residues 45–80 (PDGKSGMATCEMCGMVGVRDAFYSKTKRFCSVSCSR) form an FCS-type zinc finger. The Zn(2+) site is built by cysteine 54, cysteine 57, cysteine 74, and cysteine 78. At lysine 115 the chain carries N6-acetyllysine. 4 MBT repeats span residues 141 to 245 (FSWG…LVPP), 253 to 350 (TNWK…IGHR), 351 to 456 (FKRS…LTPP), and 464 to 560 (FKWF…LQPP). Disordered regions lie at residues 560–590 (PASQ…HKKM) and 606–628 (NFLQ…KQEP). Low complexity predominate over residues 562-573 (SQSSRENQSASS). A compositionally biased stretch (basic residues) spans 574-590 (KQKKKAKSQQYKGHKKM). Residues 609–620 (QGASDQESNGSA) are compositionally biased toward polar residues.

In terms of assembly, monomer. Component of the NuA4 histone acetyltransferase complex. Interacts with EPC1; interaction is direct and promotes recruitment of MBTD1 into the NuA4 histone acetyltransferase complex.

It is found in the nucleus. It localises to the chromosome. In terms of biological role, chromatin reader component of the NuA4 histone acetyltransferase complex, a multiprotein complex involved in transcriptional activation of select genes principally by acetylation of nucleosomal histones H4 and H2A. The NuA4 complex plays a direct role in repair of DNA double-strand breaks (DSBs) by promoting homologous recombination (HR). MBTD1 specifically recognizes and binds monomethylated and dimethylated 'Lys-20' on histone H4 (H4K20me1 and H4K20me2, respectively). In the NuA4 complex, MBTD1 promotes recruitment of the complex to H4K20me marks by competing with TP53BP1 for binding to H4K20me. Following recruitment to H4K20me at DNA breaks, the NuA4 complex catalyzes acetylation of 'Lys-15' on histone H2A (H2AK15), blocking the ubiquitination mark required for TP53BP1 localization at DNA breaks, thereby promoting homologous recombination (HR). This is MBT domain-containing protein 1 from Homo sapiens (Human).